The chain runs to 432 residues: 5-hydroxybenzimidazole synthase BzaA (432 aa).

Residues methionine 95, tyrosine 124, histidine 163, 185–187, and 226–229 each bind substrate; these read SYG and DGMR. Histidine 269 contributes to the Zn(2+) binding site. Substrate is bound at residue phenylalanine 292. Residue histidine 333 coordinates Zn(2+). The [4Fe-4S] cluster site is built by cysteine 409, cysteine 412, and cysteine 416.

The protein belongs to the ThiC family. 5-hydroxybenzimidazole synthase subfamily. [4Fe-4S] cluster serves as cofactor.

The catalysed reaction is 5-amino-1-(5-phospho-beta-D-ribosyl)imidazole + AH2 + S-adenosyl-L-methionine = 5-hydroxybenzimidazole + 5'-deoxyadenosine + formate + L-methionine + A + NH4(+) + phosphate + 2 H(+). In terms of biological role, together with BzaB, probably catalyzes the conversion of aminoimidazole ribotide (AIR) to 5-hydroxybenzimidazole (5-HBI) in a radical S-adenosyl-L-methionine (SAM)-dependent reaction. Is thus involved in the anaerobic biosynthesis of the benzimidazole lower axial ligand of the cobamide produced by M.thermoacetica. Requires BzaB for catalytic activity, as BzaA alone displays no activity. This is 5-hydroxybenzimidazole synthase BzaA from Moorella thermoacetica (strain ATCC 39073 / JCM 9320).